The primary structure comprises 374 residues: Diels-Alderase fsa2 (374 aa).

The tract at residues M1–W216 is beta-sandwich motif. The segment at W216 to S374 is beta-barrel motif.

The protein belongs to the Diels-Alderase family.

The enzyme catalyses (5S)-3-[(2E,6R,8E,10E,12E)-2,6-dimethyltetradeca-2,8,10,12-tetraenoyl]-5-(hydroxymethyl)pyrrolidine-2,4-dione = trichosetin. The protein operates within mycotoxin biosynthesis. Functionally, diels-Alderase; part of the gene cluster that mediates the biosynthesis of the HIV-1 integrase inhibitor equisetin and of fusarisetin A, both trans-fused decalin-containing tetramic acids showing also antimicrobial activity. The PKS module of fsa1 together with the enoylreductase fsa3 catalyze the formation of the polyketide unit which is then conjugated to L-serine by the condensation domain of the fsa1 NRPS module. Activity of the Dieckmann cyclase domain (RED) results in release of the Dieckmann product intermediate. Diels-Alderase fsa2 is involved in endo-selective Diels-Alder cycloaddition to form the decalin ring, leading to the production of N-desmethylequisetin also called trichosetin. Subsequent N-methylation is carried out by fsa4 to give equisetin. The enzymatic gene responsible for the conversion of equisetin to fusarisetin A has not been identified yet and is probably located outside of the fsa cluster. This is Diels-Alderase fsa2 from Fusarium sp. (strain FN080326).